Here is an 875-residue protein sequence, read N- to C-terminus: GATOR2 complex protein MIOS (875 aa).

6 WD repeats span residues 61-100 (PYMK…NSKF), 111-155 (KHAR…TPDI), 182-221 (GQND…QKMF), 223-261 (NTKA…KPVL), 265-306 (EQPK…TPIG), and 395-437 (RLRA…KQYT). The C4-type zinc finger occupies 735–781 (VSCNFCGKSISYSCSAVPHQGRGFSQYGVSGSPTKSKVTSCPGCRKP). Zn(2+)-binding residues include Cys737 and Cys740. A phosphoserine mark is found at Ser759 and Ser766. Zn(2+)-binding residues include Cys775, Cys778, Cys788, Cys827, Cys830, His832, His835, His838, Cys849, Cys854, and Cys858. Residues 782 to 863 (LPRCALCLIN…CTCKCMQLDT (82 aa)) form an RING-type; atypical zinc finger.

It belongs to the WD repeat mio family. Component of the GATOR2 subcomplex, composed of MIOS, SEC13, SEH1L, WDR24 and WDR59. The GATOR2 complex interacts with CASTOR1 and CASTOR2; the interaction is negatively regulated by arginine. CASTOR1 and CASTOR2 convey leucine availability via direct interaction with MIOS. The GATOR2 complex interacts with SESN1, SESN2 and SESN3; the interaction is negatively regulated by amino acids. Interacts with SAR1A and SAR1B; the interaction is direct, disrupted by leucine and mediates the interaction of SAR1A or SAR1B with the GATOR2 complex to negatively regulate the TORC1 signaling upon leucine deprivation.

It is found in the lysosome membrane. Its activity is regulated as follows. The GATOR2 complex is negatively regulated by the upstream amino acid sensors CASTOR1 and SESN2, which sequester the GATOR2 complex in absence of amino acids. In the presence of abundant amino acids, GATOR2 is released from CASTOR1 and SESN2 and activated. As a component of the GATOR2 complex, functions as an activator of the amino acid-sensing branch of the mTORC1 signaling pathway. The GATOR2 complex indirectly activates mTORC1 through the inhibition of the GATOR1 subcomplex. GATOR2 probably acts as an E3 ubiquitin-protein ligase toward GATOR1. In the presence of abundant amino acids, the GATOR2 complex mediates ubiquitination of the NPRL2 core component of the GATOR1 complex, leading to GATOR1 inactivation. In the absence of amino acids, GATOR2 is inhibited, activating the GATOR1 complex. Within the GATOR2 complex, MIOS is required to prevent autoubiquitination of WDR24, the catalytic subunit of the complex. The GATOR2 complex is required for brain myelination. This is GATOR2 complex protein MIOS from Pongo abelii (Sumatran orangutan).